Consider the following 453-residue polypeptide: Ribosomal protein uS12 methylthiotransferase RimO (453 aa).

Residues 5–120 enclose the MTTase N-terminal domain; that stretch reads PKVGFVSLGC…VMQAVHSHLP (116 aa). Positions 14, 50, 79, 151, 155, and 158 each coordinate [4Fe-4S] cluster. Residues 137–383 form the Radical SAM core domain; sequence LTPRHYAYLK…EVAEEVSAHR (247 aa). The region spanning 385–453 is the TRAM domain; it reads QRKVGKTLKV…ADGHDLWGEV (69 aa).

The protein belongs to the methylthiotransferase family. RimO subfamily. [4Fe-4S] cluster is required as a cofactor.

Its subcellular location is the cytoplasm. It catalyses the reaction L-aspartate(89)-[ribosomal protein uS12]-hydrogen + (sulfur carrier)-SH + AH2 + 2 S-adenosyl-L-methionine = 3-methylsulfanyl-L-aspartate(89)-[ribosomal protein uS12]-hydrogen + (sulfur carrier)-H + 5'-deoxyadenosine + L-methionine + A + S-adenosyl-L-homocysteine + 2 H(+). In terms of biological role, catalyzes the methylthiolation of an aspartic acid residue of ribosomal protein uS12. The polypeptide is Ribosomal protein uS12 methylthiotransferase RimO (Burkholderia cenocepacia (strain ATCC BAA-245 / DSM 16553 / LMG 16656 / NCTC 13227 / J2315 / CF5610) (Burkholderia cepacia (strain J2315))).